The sequence spans 90 residues: FMRFamide-like neuropeptides 27 (90 aa).

A signal peptide spans 1 to 24 (MFSFRKFLAFMLIVIALMASFSSA). A propeptide spanning residues 25-36 (QPIDEERPIFME) is cleaved from the precursor. Phe-61 carries the post-translational modification Phenylalanine amide. Positions 65 to 90 (SSSPSDISMAELRAIYGGGPVEYVQL) are excised as a propeptide.

Belongs to the FARP (FMRFamide related peptide) family.

It localises to the secreted. FMRFamides and FMRFamide-like peptides are neuropeptides. This is FMRFamide-like neuropeptides 27 from Caenorhabditis briggsae.